The following is a 296-amino-acid chain: Non-homologous end joining protein Ku (296 aa).

The Ku domain maps to 11 to 187; sequence TFGLVNIPVK…ELPEAGEPSS (177 aa). The interval 254–296 is disordered; it reads AAARRRGDEHEAPARGERRHAAAAAARTTGRPRAARASRKKRG. The span at 258-273 shows a compositional bias: basic and acidic residues; sequence RRGDEHEAPARGERRH. The span at 275 to 285 shows a compositional bias: low complexity; that stretch reads AAAAARTTGRP. Residues 286–296 are compositionally biased toward basic residues; it reads RAARASRKKRG.

It belongs to the prokaryotic Ku family. In terms of assembly, homodimer. Interacts with LigD.

In terms of biological role, with LigD forms a non-homologous end joining (NHEJ) DNA repair enzyme, which repairs dsDNA breaks with reduced fidelity. Binds linear dsDNA with 5'- and 3'- overhangs but not closed circular dsDNA nor ssDNA. Recruits and stimulates the ligase activity of LigD. This chain is Non-homologous end joining protein Ku, found in Anaeromyxobacter sp. (strain K).